A 485-amino-acid chain; its full sequence is Probable protein phosphatase 2C 3 (485 aa).

Residues 1–11 show a composition bias toward low complexity; that stretch reads MSSPSPSSEAA. 2 disordered regions span residues 1-29 and 43-72; these read MSSP…AAGG and ARAE…AEGG. Residues 13–23 are compositionally biased toward basic residues; sequence AHHHHHQRRQH. The 247-residue stretch at 107–353 folds into the PPM-type phosphatase domain; that stretch reads SSSSSSSLAS…DDTTCIVVDM (247 aa). Asp129, Gly130, Asp305, and Asp344 together coordinate Mn(2+).

Belongs to the PP2C family. Mg(2+) serves as cofactor. Requires Mn(2+) as cofactor.

It catalyses the reaction O-phospho-L-seryl-[protein] + H2O = L-seryl-[protein] + phosphate. It carries out the reaction O-phospho-L-threonyl-[protein] + H2O = L-threonyl-[protein] + phosphate. This is Probable protein phosphatase 2C 3 from Oryza sativa subsp. japonica (Rice).